A 60-amino-acid chain; its full sequence is Ribosome biogenesis protein Nop10 (60 aa).

Residues 37 to 60 form a disordered region; it reads APAPFDPADPHGKYRRALKERRRL. Positions 49–60 are enriched in basic residues; the sequence is KYRRALKERRRL.

It belongs to the NOP10 family.

Its function is as follows. Involved in ribosome biogenesis; more specifically in 18S rRNA pseudouridylation and in cleavage of pre-rRNA. The sequence is that of Ribosome biogenesis protein Nop10 from Halobacterium salinarum (strain ATCC 29341 / DSM 671 / R1).